The primary structure comprises 182 residues: Ribosome maturation factor RimM (182 aa).

The 80-residue stretch at 103–182 folds into the PRC barrel domain; it reads EDEFYWRELF…RIEVDWDPAF (80 aa).

Belongs to the RimM family. In terms of assembly, binds ribosomal protein uS19.

It is found in the cytoplasm. Its function is as follows. An accessory protein needed during the final step in the assembly of 30S ribosomal subunit, possibly for assembly of the head region. Essential for efficient processing of 16S rRNA. May be needed both before and after RbfA during the maturation of 16S rRNA. It has affinity for free ribosomal 30S subunits but not for 70S ribosomes. This chain is Ribosome maturation factor RimM, found in Vibrio cholerae serotype O1 (strain ATCC 39315 / El Tor Inaba N16961).